Consider the following 276-residue polypeptide: Ribosomal RNA small subunit methyltransferase A (276 aa).

S-adenosyl-L-methionine contacts are provided by H15, L17, G42, E64, D89, and N108.

It belongs to the class I-like SAM-binding methyltransferase superfamily. rRNA adenine N(6)-methyltransferase family. RsmA subfamily.

The protein resides in the cytoplasm. The enzyme catalyses adenosine(1518)/adenosine(1519) in 16S rRNA + 4 S-adenosyl-L-methionine = N(6)-dimethyladenosine(1518)/N(6)-dimethyladenosine(1519) in 16S rRNA + 4 S-adenosyl-L-homocysteine + 4 H(+). Functionally, specifically dimethylates two adjacent adenosines (A1518 and A1519) in the loop of a conserved hairpin near the 3'-end of 16S rRNA in the 30S particle. May play a critical role in biogenesis of 30S subunits. The polypeptide is Ribosomal RNA small subunit methyltransferase A (Prochlorococcus marinus (strain MIT 9312)).